The following is a 355-amino-acid chain: Homoserine O-succinyltransferase (355 aa).

Cysteine 146 acts as the Acyl-thioester intermediate in catalysis. Residues lysine 167 and serine 196 each coordinate substrate. Residue histidine 239 is the Proton acceptor of the active site. The active site involves glutamate 241. A substrate-binding site is contributed by arginine 253.

The protein belongs to the MetA family.

The protein resides in the cytoplasm. The enzyme catalyses L-homoserine + succinyl-CoA = O-succinyl-L-homoserine + CoA. It participates in amino-acid biosynthesis; L-methionine biosynthesis via de novo pathway; O-succinyl-L-homoserine from L-homoserine: step 1/1. Transfers a succinyl group from succinyl-CoA to L-homoserine, forming succinyl-L-homoserine. The polypeptide is Homoserine O-succinyltransferase (Methylococcus capsulatus (strain ATCC 33009 / NCIMB 11132 / Bath)).